Consider the following 436-residue polypeptide: Mannan endo-1,4-beta-mannosidase F (436 aa).

A signal peptide spans 1–18 (MRSLSSVALLSAIGAASA). Residues 19-54 (QAGPWGQCAGISHTGPTTCESGWSCVYLNDWYSQCQ) enclose the CBM1 domain. Positions 60 to 88 (SSSTTVSSTKQPSSTVAAPSSTTSAHTLP) are disordered. A ser-rich linker region spans residues 79–113 (SSTTSAHTLPTGSGSFAKTDGLKFNIDGKTKYFAG). The tract at residues 114 to 436 (TNAYWLPFLT…CAVIDHISQI (323 aa)) is catalytic. Residues W146 and N260 each contribute to the substrate site. Catalysis depends on E261, which acts as the Proton donor. Position 336 (Y336) interacts with substrate. E370 (nucleophile) is an active-site residue. W400 is a substrate binding site.

It belongs to the glycosyl hydrolase 5 (cellulase A) family.

It localises to the secreted. It carries out the reaction Random hydrolysis of (1-&gt;4)-beta-D-mannosidic linkages in mannans, galactomannans and glucomannans.. Functionally, endo-1,4-mannanase, a crucial enzyme for depolymerization of seed galactomannans and wood galactoglucomannans. The sequence is that of Mannan endo-1,4-beta-mannosidase F (manF) from Aspergillus clavatus (strain ATCC 1007 / CBS 513.65 / DSM 816 / NCTC 3887 / NRRL 1 / QM 1276 / 107).